The chain runs to 68 residues: Large ribosomal subunit protein uL30 (68 aa).

This sequence belongs to the universal ribosomal protein uL30 family. As to quaternary structure, part of the 50S ribosomal subunit.

This Bartonella quintana (strain Toulouse) (Rochalimaea quintana) protein is Large ribosomal subunit protein uL30.